The primary structure comprises 88 residues: Small ribosomal subunit protein uS15 (88 aa).

This sequence belongs to the universal ribosomal protein uS15 family. In terms of assembly, part of the 30S ribosomal subunit. Forms a bridge to the 50S subunit in the 70S ribosome, contacting the 23S rRNA.

One of the primary rRNA binding proteins, it binds directly to 16S rRNA where it helps nucleate assembly of the platform of the 30S subunit by binding and bridging several RNA helices of the 16S rRNA. Functionally, forms an intersubunit bridge (bridge B4) with the 23S rRNA of the 50S subunit in the ribosome. This chain is Small ribosomal subunit protein uS15, found in Paracidovorax citrulli (strain AAC00-1) (Acidovorax citrulli).